The sequence spans 168 residues: MPRSRINGNFIDKTFSIIANILLRIIPTTSGEKEAFTYYRDGMSAQSEGNYAEALQNYYEAMRLEIDPYDRSYILYNIGLIHTSNGEHTKALEYYFRALERNPFLPQAFNNMAVICHYRGEQAIRQGDSEIAEAWFDQAAEYWKQAIALTPGNYIEAHNWLKITRRFE.

TPR repeat units lie at residues 35-68, 72-105, and 120-153; these read AFTYYRDGMSAQSEGNYAEALQNYYEAMRLEIDP, SYILYNIGLIHTSNGEHTKALEYYFRALERNPFL, and GEQAIRQGDSEIAEAWFDQAAEYWKQAIALTPGN.

It belongs to the Ycf3 family.

The protein resides in the plastid. It localises to the chloroplast thylakoid membrane. Its function is as follows. Essential for the assembly of the photosystem I (PSI) complex. May act as a chaperone-like factor to guide the assembly of the PSI subunits. In Daucus carota (Wild carrot), this protein is Photosystem I assembly protein Ycf3.